The primary structure comprises 325 residues: Hydroxymethylglutaryl-CoA lyase, mitochondrial (325 aa).

Residues 1–27 (MAAMRKALPRRLVGLASLRAVSTSSMG) constitute a mitochondrion transit peptide. The Pyruvate carboxyltransferase domain maps to 33–300 (VKIVEVGPRD…HTGVNLQKLL (268 aa)). A substrate-binding site is contributed by arginine 41. Aspartate 42 lines the a divalent metal cation pocket. Lysine 48 is modified (N6-acetyllysine; alternate). Lysine 48 carries the post-translational modification N6-succinyllysine; alternate. N6-acetyllysine is present on lysine 111. N6-acetyllysine; alternate occurs at positions 137 and 179. N6-succinyllysine; alternate is present on residues lysine 137 and lysine 179. A divalent metal cation-binding residues include histidine 233 and histidine 235. Cysteine 266 is an active-site residue. Asparagine 275 lines the a divalent metal cation pocket. The Microbody targeting signal signature appears at 323-325 (CKL). Lysine 324 is subject to N6-acetyllysine.

It belongs to the HMG-CoA lyase family. As to quaternary structure, homodimer; disulfide-linked. Can also form homotetramers. A divalent metal cation serves as cofactor. In terms of tissue distribution, highest expression in liver. Expressed in pancreas, kidney, intestine, testis, fibroblasts and lymphoblasts. Very low expression in brain and skeletal muscle. The relative expression of isoform 2 (at mRNA level) is highest in heart (30%), skeletal muscle (22%), and brain (14%).

The protein resides in the mitochondrion matrix. The protein localises to the peroxisome. It catalyses the reaction (3S)-3-hydroxy-3-methylglutaryl-CoA = acetoacetate + acetyl-CoA. The protein operates within metabolic intermediate metabolism; (S)-3-hydroxy-3-methylglutaryl-CoA degradation; acetoacetate from (S)-3-hydroxy-3-methylglutaryl-CoA: step 1/1. Stimulated by reducing agents such as dithiothreitol (DTT). Its function is as follows. Mitochondrial 3-hydroxy-3-methylglutaryl-CoA lyase that catalyzes a cation-dependent cleavage of (S)-3-hydroxy-3-methylglutaryl-CoA into acetyl-CoA and acetoacetate, a key step in ketogenesis. Terminal step in leucine catabolism. Ketone bodies (beta-hydroxybutyrate, acetoacetate and acetone) are essential as an alternative source of energy to glucose, as lipid precursors and as regulators of metabolism. The polypeptide is Hydroxymethylglutaryl-CoA lyase, mitochondrial (HMGCL) (Homo sapiens (Human)).